The following is a 143-amino-acid chain: Large-conductance mechanosensitive channel (143 aa).

Helical transmembrane passes span 10 to 30 (FAVKGNVMDLAVGVIIGGAFS) and 89 to 109 (GSFITVAINFVILAFIIFLMV).

It belongs to the MscL family. As to quaternary structure, homopentamer.

The protein resides in the cell inner membrane. Its function is as follows. Channel that opens in response to stretch forces in the membrane lipid bilayer. May participate in the regulation of osmotic pressure changes within the cell. In Burkholderia ambifaria (strain ATCC BAA-244 / DSM 16087 / CCUG 44356 / LMG 19182 / AMMD) (Burkholderia cepacia (strain AMMD)), this protein is Large-conductance mechanosensitive channel.